A 663-amino-acid polypeptide reads, in one-letter code: Transketolase 1 (663 aa).

His-26 contributes to the substrate binding site. Lys-46 carries the post-translational modification N6-acetyllysine. Residues His-66 and Gly-114–Leu-116 contribute to the thiamine diphosphate site. Asp-155 contributes to the Mg(2+) binding site. Residues Gly-156 and Asn-185 each contribute to the thiamine diphosphate site. Positions 185 and 187 each coordinate Mg(2+). Positions 261, 358, and 385 each coordinate substrate. Residue His-261 coordinates thiamine diphosphate. The active-site Proton donor is Glu-411. Position 437 (Phe-437) interacts with thiamine diphosphate. Substrate is bound by residues His-461, Asp-469, His-473, and Arg-520.

Belongs to the transketolase family. As to quaternary structure, homodimer. It depends on Mg(2+) as a cofactor. Requires Ca(2+) as cofactor. Mn(2+) is required as a cofactor. Co(2+) serves as cofactor. The cofactor is thiamine diphosphate.

The catalysed reaction is D-sedoheptulose 7-phosphate + D-glyceraldehyde 3-phosphate = aldehydo-D-ribose 5-phosphate + D-xylulose 5-phosphate. In terms of biological role, catalyzes the transfer of a two-carbon ketol group from a ketose donor to an aldose acceptor, via a covalent intermediate with the cofactor thiamine pyrophosphate. Thus, catalyzes the reversible transfer of a two-carbon ketol group from sedoheptulose-7-phosphate to glyceraldehyde-3-phosphate, producing xylulose-5-phosphate and ribose-5-phosphate. The sequence is that of Transketolase 1 (tktA) from Escherichia coli (strain K12).